A 345-amino-acid chain; its full sequence is Dihydroorotate dehydrogenase (quinone) (345 aa).

Residues 65 to 69 (AGLDK) and Thr89 each bind FMN. Lys69 contacts substrate. A substrate-binding site is contributed by 114 to 118 (NRMGF). Positions 142 and 175 each coordinate FMN. Asn175 contributes to the substrate binding site. Residue Ser178 is the Nucleophile of the active site. Position 180 (Asn180) interacts with substrate. FMN-binding residues include Lys220 and Thr248. A substrate-binding site is contributed by 249–250 (NT). FMN is bound by residues Gly271, Gly300, and 321–322 (YT).

Belongs to the dihydroorotate dehydrogenase family. Type 2 subfamily. In terms of assembly, monomer. The cofactor is FMN.

The protein localises to the cell membrane. It carries out the reaction (S)-dihydroorotate + a quinone = orotate + a quinol. It functions in the pathway pyrimidine metabolism; UMP biosynthesis via de novo pathway; orotate from (S)-dihydroorotate (quinone route): step 1/1. Catalyzes the conversion of dihydroorotate to orotate with quinone as electron acceptor. The polypeptide is Dihydroorotate dehydrogenase (quinone) (Burkholderia thailandensis (strain ATCC 700388 / DSM 13276 / CCUG 48851 / CIP 106301 / E264)).